Consider the following 473-residue polypeptide: Siroheme synthase (473 aa).

The segment at 1-203 (MNYLPIFIDL…GNKEQAINVL (203 aa)) is precorrin-2 dehydrogenase /sirohydrochlorin ferrochelatase. Residues 22–23 (EV) and 43–44 (KE) each bind NAD(+). Phosphoserine is present on Ser-128. The tract at residues 215–473 (GEIILVGAGP…KNKFSTLTFI (259 aa)) is uroporphyrinogen-III C-methyltransferase. An S-adenosyl-L-methionine-binding site is contributed by Pro-224. Asp-247 (proton acceptor) is an active-site residue. Lys-269 acts as the Proton donor in catalysis. Residues 300 to 302 (GGD), Ile-305, Met-382, and Gly-411 contribute to the S-adenosyl-L-methionine site.

This sequence in the N-terminal section; belongs to the precorrin-2 dehydrogenase / sirohydrochlorin ferrochelatase family. The protein in the C-terminal section; belongs to the precorrin methyltransferase family.

It catalyses the reaction uroporphyrinogen III + 2 S-adenosyl-L-methionine = precorrin-2 + 2 S-adenosyl-L-homocysteine + H(+). The catalysed reaction is precorrin-2 + NAD(+) = sirohydrochlorin + NADH + 2 H(+). The enzyme catalyses siroheme + 2 H(+) = sirohydrochlorin + Fe(2+). The protein operates within cofactor biosynthesis; adenosylcobalamin biosynthesis; precorrin-2 from uroporphyrinogen III: step 1/1. It participates in cofactor biosynthesis; adenosylcobalamin biosynthesis; sirohydrochlorin from precorrin-2: step 1/1. Its pathway is porphyrin-containing compound metabolism; siroheme biosynthesis; precorrin-2 from uroporphyrinogen III: step 1/1. It functions in the pathway porphyrin-containing compound metabolism; siroheme biosynthesis; siroheme from sirohydrochlorin: step 1/1. The protein operates within porphyrin-containing compound metabolism; siroheme biosynthesis; sirohydrochlorin from precorrin-2: step 1/1. Its function is as follows. Multifunctional enzyme that catalyzes the SAM-dependent methylations of uroporphyrinogen III at position C-2 and C-7 to form precorrin-2 via precorrin-1. Then it catalyzes the NAD-dependent ring dehydrogenation of precorrin-2 to yield sirohydrochlorin. Finally, it catalyzes the ferrochelation of sirohydrochlorin to yield siroheme. This chain is Siroheme synthase, found in Buchnera aphidicola subsp. Acyrthosiphon pisum (strain APS) (Acyrthosiphon pisum symbiotic bacterium).